The primary structure comprises 612 residues: Dihydroxy-acid dehydratase (612 aa).

A Mg(2+)-binding site is contributed by D81. C122 provides a ligand contact to [2Fe-2S] cluster. The Mg(2+) site is built by D123 and K124. Position 124 is an N6-carboxylysine (K124). A [2Fe-2S] cluster-binding site is contributed by C193. E489 is a Mg(2+) binding site. The active-site Proton acceptor is S515.

This sequence belongs to the IlvD/Edd family. As to quaternary structure, homodimer. [2Fe-2S] cluster serves as cofactor. It depends on Mg(2+) as a cofactor.

The catalysed reaction is (2R)-2,3-dihydroxy-3-methylbutanoate = 3-methyl-2-oxobutanoate + H2O. The enzyme catalyses (2R,3R)-2,3-dihydroxy-3-methylpentanoate = (S)-3-methyl-2-oxopentanoate + H2O. It participates in amino-acid biosynthesis; L-isoleucine biosynthesis; L-isoleucine from 2-oxobutanoate: step 3/4. Its pathway is amino-acid biosynthesis; L-valine biosynthesis; L-valine from pyruvate: step 3/4. Functionally, functions in the biosynthesis of branched-chain amino acids. Catalyzes the dehydration of (2R,3R)-2,3-dihydroxy-3-methylpentanoate (2,3-dihydroxy-3-methylvalerate) into 2-oxo-3-methylpentanoate (2-oxo-3-methylvalerate) and of (2R)-2,3-dihydroxy-3-methylbutanoate (2,3-dihydroxyisovalerate) into 2-oxo-3-methylbutanoate (2-oxoisovalerate), the penultimate precursor to L-isoleucine and L-valine, respectively. This chain is Dihydroxy-acid dehydratase, found in Azotobacter vinelandii (strain DJ / ATCC BAA-1303).